Reading from the N-terminus, the 220-residue chain is Iron-sulfur cluster repair protein YtfE (220 aa).

It belongs to the RIC family. YtfE subfamily. As to quaternary structure, homodimer.

The protein localises to the cytoplasm. Functionally, di-iron-containing protein involved in the repair of iron-sulfur clusters damaged by oxidative and nitrosative stress conditions. In Escherichia coli O81 (strain ED1a), this protein is Iron-sulfur cluster repair protein YtfE.